Consider the following 2289-residue polypeptide: MRDADKQYFETLESHLEQAFARARQAKGQGYDPKPEVEIPVARDMADRVENILAIPDVAERIRELDDERSREEVALELVTDFVEGTVGDYDTREGKIEGAVRTAVALLTEGVVAAPIEGIDRVEILSDDDGSEFVNVYYAGPIRSAGGTAQALSVLVADYARSLLDIDEYSARTDETERYAEEVSLYDRETGLQYSPKDKETKFITKHMPIMLDGEATGNEEVSGYRDLERVDTNAARGGMCLVLAEGIALKAPKIQRYTRQLAEVEWPWLQDLIDDTIGSDEHSNNSVKNGEADIVKTDKDTNESETEDGIDNDDYNDSGLEPANSPRADATNKYLRDLIAGRPVFGHPSAAGAFRLRYGRARNHGFATAGVHPATMHIVDDFIATGTQLKTERPGKAGGVVPVDSIKGPTVRLANGDVRCINDPEEAEKLQNGVEKILDLGEYLVNFGEFIENNHPLAPAAYVFEWWIQEFEASNADVQALRDDPTVDLESPTFENAMRWAKKHDIPLHPAYTYLWHDISVTEFDHLADAVAAGEITMNEVSDTNSASGNTSLRANTNTDDTLTIDTTPAIRETMERLLIEHHQDSDSIHIPAWRALALSLGIKIESDNDTGIGDRMWSLTDLSKHARKQDDGKSAIAAVNEVAPFQVRERAPTRIGSRMGRPEKSEDRDLSPAVHTLFPIGEAGGNQRNLSDAAQSFGDNTERGQISVQLGKRRCPYCETVGFELQCAECGRHTEPQFVCRECESVLSPDESGRVHCDRCERDVTSAEWQDIDLHQRYRDALDRVDERESSFEILKGVKGLTSSNKTPEPLEKGILRAKHGVSSFKDGTVRYDMTDLPVTAVRPKELDVTAAHFRELGYQTDINGNPLQFDDQLVELKVQDIVLPDGAAEHMMKTADFVDDLLEQFYELNQFYQIDERDDLIGELVFGMAPHTSAAVVGRIVGFTSAAVGYAHPYFHAAKRRNCFHPETKIWFRDTDNEWHHETIQTFVEDRLDDPEIDAVGTLVQEVDDNTDREISVPSIDDNGNERLQSVTAVSKHRAPNHLVQIETISGREITITPDHEMHIFEQGNLVSKQASKITSGEYAVIPKRLQTISPSSHTPQHDLLREFLTRDELTADRLIIHTSDPVRLCNRVFPEEVTSCKDAVEIMQNTACHLDKNKETLIGWLGEGRIPVALLRGFVETDEALLMSIPDDVQIGLRGEKVRIDRHIGFTEELTSLLGYYAAAGIVHTQTNPISYESAQQEQSRITFYNIDTQTQTDLLNALNSVFEIEPIQYNLDGEILGVPGELIRRVFDTVFDVGTQPSHKRIPQALFDASESHITSYLRCFFSTHDSLTTDTRDISATTVSREFKEDIIAALRRLGITAEVTTQQSRSVPEVLPDWYAIDDITHHDADNSLNLTRSYVISIASSDAVTLQRDRQAQEQIKYDAQGLIANNNAIHQSRQVTDGGRKDYITEPITDIEYVDADIDYTYCLTVSETHSLIVNDLSQKQCDGDEDCVMLLMDGLLNFSREYLPDKRGGSVAADSRLVAVSPDDKIVFTTIEDFWKKLNTPIERNGKFRKRTCVSEGWQTYAFDENHEASLRPIEKAIRYTADESEQLRRITTQLGRSLDITDEHSLFRYDDGIEEVAGDDLTAGDIIVAPRTLDVEVTQTTLDLSEYIHDNERCPSEQTGSGELNLASKSAISDSRNKETPGVTHNILPQRSKFTDEMTTLSPTAVGGLESEQNETLRVGESTGAIERYINVDDSFGWLLGQFIAQRSISTDALTMTVHTAAEKHAERIVATSDSVFGIKPTVNSIERGYEIVFPSVFDTIVSGLTAKEQSEPEQDVDHTHTDEIGIPECILHAPDDIVLSFLQGFILAENAQRKGNAASEASEMVSESETTVTLETPSVGVKDGLVFLCHRLGVITDISEKSGEEYSVHFEESRYTVSIATEGKTNPLDQILNGERPTMPEGVSVPVPDALLTIHESIANSPHIDQVIPDTVVQQETVSLETLQSLLTGLSTVDLPAQLEAKRDELTLLTEGDLSYLRVESVECVDYDGYLYDLQVGGEPVFTANWLYAHNSMDAPLVMSSRIDPSEIDDEAHNMDIVRQYPREFYEATRRMEDPDEWEEEVTIAEEYLDTDNEYTGFNHTHDTTDIAAGPDLSAYKTLDSMMDKMDAQLELARKLRAVDETDVAERVIEYHFLPDLIGNLRAFSRQQTRCLDCGESYRRMPLTGECRECGGRVNLTVHEGSVNKYMDTAIHIAEEFDCREYTKQRLEVLERSLESIFEDDTNKQSGIADFM.

Disordered stretches follow at residues 279-330 (IGSD…SPRA) and 544-563 (SDTN…NTDD). The segment covering 292–304 (GEADIVKTDKDTN) has biased composition (basic and acidic residues). A compositionally biased stretch (acidic residues) spans 305-318 (ESETEDGIDNDDYN). Residues 544-557 (SDTNSASGNTSLRA) are compositionally biased toward polar residues. 2 consecutive DOD-type homing endonuclease domains span residues 1222–1367 (LLGY…RLGI) and 1755–1911 (LLGQ…RLGV).

Belongs to the archaeal DNA polymerase II family. In terms of assembly, heterodimer of a large subunit and a small subunit. Post-translationally, this protein undergoes a protein self splicing that involves a post-translational excision of the intervening region (intein) followed by peptide ligation.

It carries out the reaction DNA(n) + a 2'-deoxyribonucleoside 5'-triphosphate = DNA(n+1) + diphosphate. It catalyses the reaction Exonucleolytic cleavage in the 3'- to 5'-direction to yield nucleoside 5'-phosphates.. Its function is as follows. Possesses two activities: a DNA synthesis (polymerase) and an exonucleolytic activity that degrades single-stranded DNA in the 3'- to 5'-direction. Has a template-primer preference which is characteristic of a replicative DNA polymerase. This Haloquadratum walsbyi (strain DSM 16790 / HBSQ001) protein is DNA polymerase II large subunit.